A 252-amino-acid polypeptide reads, in one-letter code: uncharacterized protein (252 aa).

28 to 35 (GCDGTGKS) provides a ligand contact to ATP.

This sequence to E.coli YghS and YghT.

This is an uncharacterized protein from Escherichia coli O6:H1 (strain CFT073 / ATCC 700928 / UPEC).